The primary structure comprises 204 residues: Phosphopantothenoylcysteine decarboxylase (204 aa).

FMN is bound by residues Thr53 and 104-107; that span reads DANT. Asn140 is a binding site for substrate. Residue Cys173 is the Proton donor of the active site.

The protein belongs to the HFCD (homooligomeric flavin containing Cys decarboxylase) superfamily. Homotrimer. It depends on FMN as a cofactor.

The enzyme catalyses N-[(R)-4-phosphopantothenoyl]-L-cysteine + H(+) = (R)-4'-phosphopantetheine + CO2. The protein operates within cofactor biosynthesis; coenzyme A biosynthesis; CoA from (R)-pantothenate: step 3/5. In terms of biological role, catalyzes the decarboxylation of the cysteine moiety of 4-phosphopantothenoylcysteine to form 4'-phosphopantotheine and this reaction forms part of the biosynthesis of coenzyme A. In Mus musculus (Mouse), this protein is Phosphopantothenoylcysteine decarboxylase (Ppcdc).